Here is a 612-residue protein sequence, read N- to C-terminus: 1-deoxy-D-xylulose-5-phosphate synthase (612 aa).

Residues H77 and 118 to 120 each bind thiamine diphosphate; that span reads GHS. D147 provides a ligand contact to Mg(2+). Thiamine diphosphate-binding positions include 148–149, N176, Y288, and E365; that span reads AA. A Mg(2+)-binding site is contributed by N176.

It belongs to the transketolase family. DXPS subfamily. Homodimer. Mg(2+) is required as a cofactor. Requires thiamine diphosphate as cofactor.

The enzyme catalyses D-glyceraldehyde 3-phosphate + pyruvate + H(+) = 1-deoxy-D-xylulose 5-phosphate + CO2. Its pathway is metabolic intermediate biosynthesis; 1-deoxy-D-xylulose 5-phosphate biosynthesis; 1-deoxy-D-xylulose 5-phosphate from D-glyceraldehyde 3-phosphate and pyruvate: step 1/1. Its function is as follows. Catalyzes the acyloin condensation reaction between C atoms 2 and 3 of pyruvate and glyceraldehyde 3-phosphate to yield 1-deoxy-D-xylulose-5-phosphate (DXP). The protein is 1-deoxy-D-xylulose-5-phosphate synthase of Malacoplasma penetrans (strain HF-2) (Mycoplasma penetrans).